A 964-amino-acid polypeptide reads, in one-letter code: Glycine dehydrogenase (decarboxylating) (964 aa).

Position 710 is an N6-(pyridoxal phosphate)lysine (Lys710).

The protein belongs to the GcvP family. In terms of assembly, the glycine cleavage system is composed of four proteins: P, T, L and H. Pyridoxal 5'-phosphate serves as cofactor.

It carries out the reaction N(6)-[(R)-lipoyl]-L-lysyl-[glycine-cleavage complex H protein] + glycine + H(+) = N(6)-[(R)-S(8)-aminomethyldihydrolipoyl]-L-lysyl-[glycine-cleavage complex H protein] + CO2. The glycine cleavage system catalyzes the degradation of glycine. The P protein binds the alpha-amino group of glycine through its pyridoxal phosphate cofactor; CO(2) is released and the remaining methylamine moiety is then transferred to the lipoamide cofactor of the H protein. In Saccharophagus degradans (strain 2-40 / ATCC 43961 / DSM 17024), this protein is Glycine dehydrogenase (decarboxylating).